The sequence spans 310 residues: MDRLLRLGGGMPGLGQGPPTDAPAVDTAEQVYISSLALLKMLKHGRAGVPMEVMGLMLGEFVDDYTVRVIDVFAMPQSGTGVSVEAVDPVFQAKMLDMLKQTGRPEMVVGWYHSHPGFGCWLSGVDINTQQSFEALSERAVAVVVDPIQSVKGKVVIDAFRLINANMMVLGHEPRQTTSNLGHLNKPSIQALIHGLNRHYYSITINYRKNELEQKMLLNLHKKSWMEGLTLQDYSEHCKHNESVVKEMLELAKNYNKAVEEEDKMTPEQLAIKNVGKQDPKRHLEEHVDVLMTSNIVQCLAAMLDTVVFK.

The MPN domain maps to 31–166 (VYISSLALLK…IDAFRLINAN (136 aa)). Zn(2+) is bound by residues H113, H115, and D126. The short motif at 113 to 126 (HSHPGFGCWLSGVD) is the JAMM motif element. Phosphoserine is present on residues S150 and S224. A Phosphothreonine modification is found at T266.

The protein belongs to the peptidase M67A family. PSMD14 subfamily. As to quaternary structure, component of the 19S proteasome regulatory particle complex. The 26S proteasome consists of a 20S core particle (CP) and two 19S regulatory subunits (RP). The regulatory particle is made of a lid composed of 9 subunits including PSMD4, a base containing 6 ATPases and few additional components. Within the complex, PSMD4 interacts with subunit PSMD7 through their respective MPN domain. Interacts with TXNL1. As to expression, widely expressed. Highest levels in heart and skeletal muscle.

Its function is as follows. Component of the 26S proteasome, a multiprotein complex involved in the ATP-dependent degradation of ubiquitinated proteins. This complex plays a key role in the maintenance of protein homeostasis by removing misfolded or damaged proteins, which could impair cellular functions, and by removing proteins whose functions are no longer required. Therefore, the proteasome participates in numerous cellular processes, including cell cycle progression, apoptosis, or DNA damage repair. The PSMD14 subunit is a metalloprotease that specifically cleaves 'Lys-63'-linked polyubiquitin chains within the complex. Plays a role in response to double-strand breaks (DSBs): acts as a regulator of non-homologous end joining (NHEJ) by cleaving 'Lys-63'-linked polyubiquitin, thereby promoting retention of JMJD2A/KDM4A on chromatin and restricting TP53BP1 accumulation. Also involved in homologous recombination repair by promoting RAD51 loading. The polypeptide is 26S proteasome non-ATPase regulatory subunit 14 (PSMD14) (Homo sapiens (Human)).